A 368-amino-acid polypeptide reads, in one-letter code: MVTGWHRPTWIEIDRAAIRENIKNEQNKLPENVDLWAVVKANAYGHGIIEVARTAKEAGAKGFCVAILDEALALREAGFQDDFILVLGATRKEDANLAAKNHISLTVFREDWLEDLTLEAPLRIHLKVDSGMGRLGIRTVEEARQIETTIASDNQLQLEGIYTHFATADQLETSYFEQQLAKFQTILTSLKNRPTYVHTANSAASLLQPQIGFDAIRFGISMYGLTPSTEIKTSLPFELKPALALYTEMVHVKELAPGDSVSYGATYTATEREWVATLPIGYADGLIRHYSGFHVLVGGELAPIIGRVCMDQTIIKLPREFQTGSKVTIIGEDNGNAITADDAAQYLDTINYEVTCLLNERIPRKYLH.

K40 acts as the Proton acceptor; specific for D-alanine in catalysis. K40 is modified (N6-(pyridoxal phosphate)lysine). Position 134 (R134) interacts with substrate. The active-site Proton acceptor; specific for L-alanine is Y263. M310 contributes to the substrate binding site.

This sequence belongs to the alanine racemase family. It depends on pyridoxal 5'-phosphate as a cofactor.

The catalysed reaction is L-alanine = D-alanine. It participates in amino-acid biosynthesis; D-alanine biosynthesis; D-alanine from L-alanine: step 1/1. In terms of biological role, catalyzes the interconversion of L-alanine and D-alanine. May also act on other amino acids. The protein is Alanine racemase (alr) of Listeria monocytogenes serotype 4a (strain HCC23).